The following is a 332-amino-acid chain: tRNA(Ile)-lysidine synthase (332 aa).

Position 39 to 44 (Ser-39 to Ser-44) interacts with ATP.

Belongs to the tRNA(Ile)-lysidine synthase family.

It is found in the cytoplasm. It carries out the reaction cytidine(34) in tRNA(Ile2) + L-lysine + ATP = lysidine(34) in tRNA(Ile2) + AMP + diphosphate + H(+). Ligates lysine onto the cytidine present at position 34 of the AUA codon-specific tRNA(Ile) that contains the anticodon CAU, in an ATP-dependent manner. Cytidine is converted to lysidine, thus changing the amino acid specificity of the tRNA from methionine to isoleucine. In Leifsonia xyli subsp. xyli (strain CTCB07), this protein is tRNA(Ile)-lysidine synthase.